The sequence spans 312 residues: MALPVLFDCDPGHDDAIAIVLALASPELDVKAITSSAGNQTPDKTLRNVLRMLTLLGRNDIPVAGGAIKPLMRDLIIADNVHGESGLDGPALPEPSFAPQTCTAVELMAKTLRESPEPVTIVATGPQTNVALLLNSHPELHRKIARIVIMGGAMGLGNWTPAAEFNIYVDPEAAEIVFQSGIPVVMAGLDVTHKAQIHAEDTERFRATGNPVSTIVAELLDFFLEYHKDEKWGFTGAPLHDPCTIAWLLKPELFTTVERWVGVETQGKYTQGMTVVDYYFLTGNKPNATVMVDIDRQGFVDLLAERLAFYAS.

H240 is a catalytic residue.

This sequence belongs to the IUNH family. RihA subfamily.

In terms of biological role, hydrolyzes cytidine or uridine to ribose and cytosine or uracil, respectively. This Citrobacter koseri (strain ATCC BAA-895 / CDC 4225-83 / SGSC4696) protein is Pyrimidine-specific ribonucleoside hydrolase RihA.